The primary structure comprises 175 residues: Transcriptional repressor NrdR (175 aa).

The segment at 3–32 is a zinc-finger region; it reads CPYCSHPDSKVIDSRDVDDGVRRRRECVVC. Residues 47-137 enclose the ATP-cone domain; that stretch reads LFVVKKDQRR…VYREFTDITQ (91 aa).

The protein belongs to the NrdR family. Zn(2+) serves as cofactor.

Its function is as follows. Negatively regulates transcription of bacterial ribonucleotide reductase nrd genes and operons by binding to NrdR-boxes. The chain is Transcriptional repressor NrdR from Dehalococcoides mccartyi (strain ATCC BAA-2100 / JCM 16839 / KCTC 5957 / BAV1).